A 388-amino-acid chain; its full sequence is MKKGSRHNFVVSQENWTLHRKGYQDQRRHQEKVKEAIRKNLPDLVSEENIIMSNGREVIKIPIRSLDEYKIRYNYDKNKHVGQGDGDSQVGDVIARDPSAGQQGPGKGQGAGDQPGEDYFEAEVSILELEELLFRELELPNLQQKEEDHLVVEHIEFNDIRKKGLMGNIDKRRTILSAIKRNALEGRPGLIPIYNDDLRFKTWNEVVRPESKAVVLAMMDTSGSMGRWEKYMARSFFFWMTRFLRTKYETVDIEFIAHHTEAKVVSEEDFFSKGESGGTICSSAYRKALELINEKYDPARYNIYPFHFSDGDNLTSDNARCLKLVHELMESSSMFGYGEVNQYSRHSTLMNAYKNLKDPRFRSYVLKEKGDVYRAMKTFFKKEEEAVS.

The disordered stretch occupies residues 80–117 (HVGQGDGDSQVGDVIARDPSAGQQGPGKGQGAGDQPGE). A compositionally biased stretch (gly residues) spans 103-113 (QGPGKGQGAGD).

The protein belongs to the UPF0229 family.

The chain is UPF0229 protein BH1031 from Halalkalibacterium halodurans (strain ATCC BAA-125 / DSM 18197 / FERM 7344 / JCM 9153 / C-125) (Bacillus halodurans).